Reading from the N-terminus, the 258-residue chain is Lyso-ornithine lipid O-acyltransferase (258 aa).

The chain crosses the membrane as a helical span at residues 7–29 (LLRSARLLGLVALGLGLAAWVSL).

This sequence belongs to the 1-acyl-sn-glycerol-3-phosphate acyltransferase family. OlsA subfamily.

It is found in the membrane. The catalysed reaction is a lyso-ornithine lipid + a fatty acyl-[ACP] = an N(2)-[(3R)-3-(acyloxy)acyl]-L-ornithine lipid + holo-[ACP]. It participates in lipid metabolism. Functionally, catalyzes the second step in the formation of ornithine lipids, which are phosphorus-free membrane lipids. Uses acyl-acyl carrier protein (acyl-AcpP) as an acyl donor and converts lyso-ornithine lipid (LOL) into ornithine lipid (OL). The protein is Lyso-ornithine lipid O-acyltransferase of Pseudomonas aeruginosa (strain ATCC 15692 / DSM 22644 / CIP 104116 / JCM 14847 / LMG 12228 / 1C / PRS 101 / PAO1).